A 4036-amino-acid polypeptide reads, in one-letter code: MSQQRYPEPIAVIGSACRFPGASSSPSKLWSLLQEPRDVLKKFDPDRLNLKRFHHTNGDTHGATDVNNKSYLLEENTRLFDASFFGISPLEAAGMDPQQRLLLETVYESFEAAGVTLDQLKGSLTSVHVGVMTNDYSFIQLRDPETLSKYNATGTANSIMSNRISYVFDLKGPSETIDTACSSSLVALHHAAQGLLSGDCETAVVAGVNLIFDPSPYITESKLHMLSPDSQSRMWDKSANGYARGEGAAALLLKPLSRALRDGDHIEGIVRGTGVNSDGQSSGITMPFAPAQSALIRQTYLRAGLDPIKDRPQYFECHGTGTPAGDPVEARAISESLLDGETSSDNPLYVGSVKTVIGHLEGCAGLAGVIRAILALKHRTIPPNLHFKELNPAIAQYYGPLQITTKALPWPEVPAGTPARASVNSFGFGGTNAHAIIESYDNGSASSSIQAQDEQPEESSEGGLGPLIFSAASGSSLLRTVQAYLEHLREHPSVDLQDLSWLLQTRRTTHRVRTHFSGASRDTVLENMATFVTTHEKASSATIGYQPQLVNPSEAPGVLGIFTGQGAQWPAMGRELIQKSPLFRKTIEECEAILNALPEGDVPEWSLMQELTADASSSRLSEAMISQPLCTAVQLGLVNLLTAAGISFDAVVGHSSGEIAATYASGIITTKGAMQIAYYRGFHAKLATGPDGERGGMLAAGLSFEKATQFCSRPEFQGRIQVAASNAPQSVTLSGDINAIKEAKEQLDADNIFARQLKVDTAYHSHHMQPCAGPYLQSLLACDIELQAPKPGSCVWNSSVRGDAELLKRDLSSLKGTYWVANMVQTVLFSQAIESSIWHGGPFDLAIEVGPHPALKGPVEQTLKAAYGSVPMYTGALKRNGSDVEAFSAALGVTWAQLGPSFVDFSSFREAFYESQAPAPKVIKDLPTYSWDHEKDYWRESRISRRYRTGKDVGHELLGRRTPDDNDHELRWRNVLKLSEMPWVRGHEVLDEVLLPGAAYVSIAVEAGKHLATSTGKSVRLIDVENVDILRPVVVPDNQEGVETLFTAHILSSSPSEGVLRARFSYYICNDQSSGSMVHTCSGDLVVHLGADSESGDLLPPRDAVPPNLVNIDGERVYKMFEGIDLKYSGVFRSIADSKRCLNYATATGVWPEGSLSNDYGVHPAMLDVAFQTLFIARAHPASRQITSALLPSHIDRVRVSPSVQILQPEGGGDIKAAFESWVVGQTATSLTGDLNVYDAETGKTFLQVEGLATNMVGEQDASHDQPIFSKTVWGRYDSVGLADPVRDAVKDAEATRLAEDIERVALFYIKRIVNQIGADERAGFQWYHQRMFGAFEKHLATIKNDEHPVLPSNWLADEPSVLEDISNAHPDSIDLQLLHAVGENLADVVRGDTQLLEVMQEDDMLDRFYMDNCASAPINQSIADVLQQITFKFPRCNILEIGAGTGGTTWSVLNSINNAYDSYTYTDISSGFFPNAAEKFSDFSNKMAFKILDVEKDPTTQGFVEESYDVIIAANVLHATRSLETTLRNVRSLLKPGGFLVLMEVTGMQSVRVTFILGGLPGWWLGADDGRPLGPGVSVVDWDVLFDKTGFSGADTVMHDLEDDTKHCNSLIVTQAVDDAFLRMREPLSFMAELPPLTEPLLVIGGKKLTTTKMMSEIQKLLPRSWKRHVQTVGSIDEIDTAKLIPRMDVICLQEADEPLFATPMTAKRIALLKSLLMSARNMLWVTGAGKSHTPRTSIFLGIARIVPSELPQLNLQMLGLESGASHSVAARNCVEAFLRLRATEEGNGSHMLWSQEPEMEILADGQTMVPRVMPNKPLNELYNASRRAVTKTIDATDVPVRAVAGPGKMTLQAAELQDASAQRARVQVKYALHIPSVNGKQVYLVCGHRQGSESATPVMAISESNGTIVEVDLERLITIDEDGCTPGVLAATANHLLVRAIATLASGARKVLLYQAEESLAAMVATEIAAQGGEAHFASSSSDAPDSWIKIHVNSSKRALSRVVPRDVQLYVDCSGYSQSAVSSVSSASDTLRACVPADCVAQQLGGGLLQEAFQRMDAGGSTLFKDSYAKAKSSFSENQEQILDCDLVKAADLAGADASSLTRKRYVTDWQEKESLTLTIQPLDLQGIFKPDKTYFMVGMAGGLGLSICQWMIRNGAKHLVITSRNPKIDDSLLEDARRANAKLHVMTMDVSKRDSVEKVVRLVQDTLPPIAGVCNAAMVLSDKLFIDMDVDQLNNTLAAKVYGTEHLDSVFDDMPLDFFVLLSSVATVIGNIGQANYHAANLFMTSLIAQRRARGLTGSVVHVGYISDVGYVTRQDRDRQLDQHFRNVRLMPLSETDVHHAFAEAIRGGKPGSVSGAHDIIMGLETFKEPLAPEKQPLWLANPRFAHFMPPTMLQTQQQHRGSGSADNVRKQVEEAETEDEAVAAVVKAFCSKLESILQLQEDSVNIQRAIIDLGIDSLVAVEIRTWFLKELGAEVAVVKILGGDTVIQVCTWATKKVMAINMKKKEAAQLDEAAAEKTATAATPAPAPDAAPAPAAPTKTASLTVPVENTSRTPESNSASVSDADDSESSGAVSKLGTSISGSSYAKMEFGDADARSESTGSSGMADSDDSSNRPETIREEIMSQAQSRIWFLSKHLEDPAAFNMTFHYRAQGPLSMARLRHALQVTTHHHECLRMRFYPRLGDGQPMQGVMGSSLYELEHIPDANDSDVKNELARFKTRVWDLENGKTFGVTVLSHSAEEHDIIYGYHHLVMDVVGWHVFVHDLDKAYKMQSLDKSAGSYFDYTSLQLEQEKAGVLEEDLKYWQAEFTTTPETLPLLPMAHTIVRPAEPGNESHHEYQELTSGQFTALKETCQRLRISPFHFHVAVMQVLLARYANTEDVCIGIVDANRNDARFAQTVGCFINMLPVRSHVSSHDSFANVARAASKKALAAFAHSAVPFDMILDKVKAPRSSASTPLFQAAVNYRTGSVWELPLGDCQMKLAGAKDADNPYDISLGITDMGSGCMIEIHCQASLYTSEGCRTILDSYVRLLESFAANPHLDITECEIYDKSQVGQALELGKGPEMEFGWPSTMSQRVLDMCSLHSDKSAVKDNTITLSYSNLASRVNAVADAILQAGCTAGSHVAVLCEPTVDATVAMLAVLHVGAVYVPLDTSLPTARHAAMVQSSRPALLLSHSATEGLVRDLGNELDSPIRQVRIDSISEEARQEVPCAAERGAPAVLLFTSGSTGTPKGIFLSQANFVNHLALKIHVLGFGQECVLQQSSLGFDMSLIQTFCALANGGLLVIVPSEMRRDPVELTGLLSRERISLTIATPSEYLAWLRYGEASLTENTAWRHACMGGEQVSRQLKSELRRVNLSGLRLTNCYGPTEITAAATFQAIDLEEKQDEDERAKFAVGKALPNYSVCILDASGQPQPAQHAGEICIGGAGVALGYLNLADETARKFIADVTSTADRRMYRTGDQGRLLSDGTLLCLGRLDGDTQVKLRGLRIELQEVESALLQAADGLLSTAVVSQRGDVLVAHATLSPGRDNASEEELTQVLGHLRLPQYFIPAAIIILAAMPTNSNGKLDRKAIGALSLPERGSNGTQEKMTIREGEVRLLWERVLPDTSTTGRLAPSSDFFLCGGNSLLMMKLQAAIRESIGVAISTRTLYQASTLREMARRIDEHQTAEGDDTEREIDWAAETTVPKALLRQIRELPAPVKSSKSDGIEVLMTGATSFLGGHLLQALLRSPVVRKVHCVAVLADDQHQLPRDEKIECYTGSLLSSTLGLNADERDRLEQTVDVIIHAGSSGHCLNTYDSLRTPNLLSTHFLSSLALPRSIPLLLLSSNRVVLLSGSTAPPPGSVAAFAPATDGLEGYTASKWASESFLENLVAHMQQVSRSPLTVAVHRPCVVVSEQAPNSDALNAILRYSVSMRCVPQLDNVEGYLDFGKVEKIVDEIADSALQLAQAGSQDQEIRFRHHSGGAKVPVREFRAHMEDIYGGSFDEVDVTEWMRRAADAGIDPLITAYLEGILDSGSPMVFPYLGEE.

One can recognise a Ketosynthase family 3 (KS3) domain in the interval 7–439; that stretch reads PEPIAVIGSA…GTNAHAIIES (433 aa). Catalysis depends on for beta-ketoacyl synthase activity residues cysteine 181, histidine 318, and histidine 359. The interval 561 to 886 is malonyl-CoA:ACP transacylase (MAT) domain; sequence IFTGQGAQWP…LKRNGSDVEA (326 aa). The N-terminal hotdog fold stretch occupies residues 955 to 1092; it reads HELLGRRTPD…GDLVVHLGAD (138 aa). Positions 955–1262 are dehydratase (DH) domain; the sequence is HELLGRRTPD…ATNMVGEQDA (308 aa). The 309-residue stretch at 955–1263 folds into the PKS/mFAS DH domain; the sequence is HELLGRRTPD…TNMVGEQDAS (309 aa). The active-site Proton acceptor; for dehydratase activity is the histidine 987. Residues 1109 to 1263 form a C-terminal hotdog fold region; that stretch reads LVNIDGERVY…TNMVGEQDAS (155 aa). Catalysis depends on aspartate 1168, which acts as the Proton donor; for dehydratase activity. A methyltransferase (MT) domain region spans residues 1402–1601; it reads EDDMLDRFYM…FSGADTVMHD (200 aa). Residues 2136 to 2277 are ketoreductase (KR) domain; sequence KTYFMVGMAG…SVATVIGNIG (142 aa). In terms of domain architecture, Carrier 1 spans 2425–2502; that stretch reads EAVAAVVKAF…QVCTWATKKV (78 aa). Residue serine 2462 is modified to O-(pantetheine 4'-phosphoryl)serine. Disordered stretches follow at residues 2520-2583 and 2597-2621; these read AEKT…KLGT and DADARSESTGSSGMADSDDSSNRPE. The segment covering 2530–2540 has biased composition (pro residues); sequence APAPDAAPAPA. The condensation (C) domain stretch occupies residues 2627 to 3054; it reads IMSQAQSRIW…HLDITECEIY (428 aa). The adenylation (A) (KR) domain stretch occupies residues 3088 to 3485; that stretch reads SLHSDKSAVK…GTLLCLGRLD (398 aa). The reductase (RED) domain stretch occupies residues 3088–3485; that stretch reads SLHSDKSAVK…GTLLCLGRLD (398 aa). A Carrier 2 domain is found at 3596-3675; the sequence is EKMTIREGEV…EMARRIDEHQ (80 aa). Position 3635 is an O-(pantetheine 4'-phosphoryl)serine (serine 3635).

It in the C-terminal section; belongs to the NRP synthetase family.

It catalyses the reaction L-tyrosine + holo-[ACP] + 7 malonyl-CoA + acetyl-CoA + 8 AH2 + 2 S-adenosyl-L-methionine + ATP + 4 H(+) = N-[(4E,6E,10S,12Z,14E)-6,10-dimethyl-3-oxohexadeca-4,6,12,14-tetraenoyl]-L-tyrosyl-[ACP] + 8 A + AMP + 2 S-adenosyl-L-homocysteine + 7 CO2 + diphosphate + 8 CoA + 6 H2O. Its pathway is mycotoxin biosynthesis. Functionally, hybrid PKS-NRPS synthetase; part of the gene cluster that mediates the biosynthesis of ilicicolin H, a 4-hydroxy-2-pyridonealkaloid that has potent and broad antifungal activities by inhibiting the mitochondrial respiration chain. IliA assembles the backbone of ilicicolin H. The PKS portion and trans-acting enoyl reductase iliB work together to construct an octaketide, and two methyl groups are introduced by the MT domain during the chain assembly. The nascent chain is then condensed with tyrosine, catalyzed by the C domain, and the resulting PKS-NRPS hybrid is offloaded by the RED domain to form an advanced tetramic acid intermediate. The biosynthesis of ilicicolin H starts with formation of the tetramic acid by the hybrid PKS-NRPS synthetase iliA with the partnering trans-enoyl reductase iliB since iliA lacks a designated enoylreductase (ER) domain. The cytochrome P450 monooxygenase iliC then catalyzes the ring expansion of the tetramate to the acyclic 2-pyridone. The pericyclase iliD further converts the acyclic 2-pyridone into 8-epi-ilicicolin H. 8-epi-ilicicolin H might then spontaneously convert to ilicicolin H, since ilicicolin H is produced in the absence of the epimerase iliE, in contrast to what was observed for the Talaromyces variabilis ilicolin H biosynthetic pathway. The protein is Hybrid PKS-NRPS synthetase iliA of Neonectria sp. (strain DH2).